We begin with the raw amino-acid sequence, 449 residues long: Alpha-L-fucosidase (449 aa).

The N-terminal stretch at 1-19 (MGLLLLLSLLSACFQPRYA) is a signal peptide. N-linked (GlcNAc...) asparagine glycans are attached at residues asparagine 156, asparagine 224, asparagine 362, and asparagine 375.

Belongs to the glycosyl hydrolase 29 family. Homotetramer.

It localises to the secreted. It carries out the reaction an alpha-L-fucoside + H2O = L-fucose + an alcohol. Functionally, alpha-L-fucosidase is responsible for hydrolyzing the alpha-1,6-linked fucose joined to the reducing-end N-acetylglucosamine of the carbohydrate moieties of glycoproteins. The sequence is that of Alpha-L-fucosidase from Branchiostoma floridae (Florida lancelet).